We begin with the raw amino-acid sequence, 900 residues long: Sterol regulatory element-binding protein 1 (900 aa).

The segment covering 1 to 16 (MQSSIPSVSVSVASPA) has biased composition (low complexity). Disordered regions lie at residues 1–49 (MQSS…TKAS) and 206–263 (TTCK…PKKT). Positions 1–440 (MQSSIPSVSV…FALPPFLMSP (440 aa)) are nuclear form of sre1; complements deletions of sre1 or scp1. At 1 to 442 (MQSSIPSVSV…LPPFLMSPFT (442 aa)) the chain is on the cytoplasmic side. Residues 21–32 (TKASPDSKSPNS) are compositionally biased toward polar residues. Over residues 35 to 49 (AIPSSSPLASSTKAS) the composition is skewed to low complexity. Positions 260–332 (PKKTAHNMIE…AKATEYIRHL (73 aa)) constitute a bHLH domain. Residues 443–463 (GTVLFNMLKIGVVLLGLFYLL) form a helical membrane-spanning segment. Topologically, residues 464 to 509 (HDNSLFKGFKGEKKSKVSTRSSMSPSSILFRKTVFEKYCLLDHSTS) are lumenal. Residues 510–530 (TISLFFGLLIFTLKSAYGYLT) traverse the membrane as a helical segment. Residues 531–900 (HRLSALYTSS…QEDLGYVSSA (370 aa)) are Cytoplasmic-facing. A phosphoserine mark is found at Ser-898 and Ser-899.

Forms a tight complex with scp1, composed of 4 copies of scp1 and 4 copies of sre1, which protects sre1 precursor from degradation by the proteasome. Post-translationally, in low oxygen or sterol conditions, undergoes proteolytic cleavage by rhomboid-type protease rbd2 and is released as soluble transcription factor from the membrane. In terms of processing, processed form is phosphorylated.

The protein resides in the endoplasmic reticulum membrane. Its subcellular location is the nucleus. Functionally, precursor of the transcription factor form (Processed sterol regulatory element-binding protein 1), which is embedded in the endoplasmic reticulum membrane. Low oxygen or sterol conditions promote processing of this form, releasing the transcription factor form that translocates into the nucleus and activates transcription of genes required for adaptation to anaerobic growth. Transcriptional activator required for transcription of genes required for adaptation to anaerobic growth like those implicated in the nonrespiratory oxygen-consumptive biosynthetic pathways of sterol, heme, sphingolipid, and ubiquinone biosynthesis. May monitor oxygen levels through sterol synthesis steps which require oxygen. This chain is Sterol regulatory element-binding protein 1, found in Schizosaccharomyces pombe (strain 972 / ATCC 24843) (Fission yeast).